A 216-amino-acid chain; its full sequence is Eukaryotic translation initiation factor 3 subunit K (216 aa).

Residues 40–202 enclose the PCI domain; the sequence is YDLDANLAVL…HIKSKNIAEK (163 aa).

Belongs to the eIF-3 subunit K family. Component of the eukaryotic translation initiation factor 3 (eIF-3) complex.

Its subcellular location is the cytoplasm. Its function is as follows. Component of the eukaryotic translation initiation factor 3 (eIF-3) complex, which is involved in protein synthesis of a specialized repertoire of mRNAs and, together with other initiation factors, stimulates binding of mRNA and methionyl-tRNAi to the 40S ribosome. The eIF-3 complex specifically targets and initiates translation of a subset of mRNAs involved in cell proliferation. The sequence is that of Eukaryotic translation initiation factor 3 subunit K from Nematostella vectensis (Starlet sea anemone).